A 329-amino-acid polypeptide reads, in one-letter code: Methionyl-tRNA formyltransferase (329 aa).

(6S)-5,6,7,8-tetrahydrofolate is bound at residue 112 to 115 (SILP).

Belongs to the Fmt family.

It catalyses the reaction L-methionyl-tRNA(fMet) + (6R)-10-formyltetrahydrofolate = N-formyl-L-methionyl-tRNA(fMet) + (6S)-5,6,7,8-tetrahydrofolate + H(+). Its function is as follows. Attaches a formyl group to the free amino group of methionyl-tRNA(fMet). The formyl group appears to play a dual role in the initiator identity of N-formylmethionyl-tRNA by promoting its recognition by IF2 and preventing the misappropriation of this tRNA by the elongation apparatus. In Shewanella sediminis (strain HAW-EB3), this protein is Methionyl-tRNA formyltransferase.